Consider the following 250-residue polypeptide: MAADPIHQFQITKLFTLGHIGGQEIAFTNSSAYMFLSVGVISLLMIGGMAGRQLVPGRIQSVAELSYEFVAGIIRSTAGKEGMKFFPLVFSLFMFIAVSNLIGIIPYTFTVSSHLIVTVALALLVFVIVLFYGLYKNGLKFFKLFVPSGVPVYILPLVVFIEVISFFLKPVSHSVRLFANMLAGHIALKVFASFVGMLGALGFLGWMGAILPLGLTVAVTALEILVAFLQAYVFTILTCIYLNDAMHPGH.

6 consecutive transmembrane segments (helical) span residues 31 to 51, 85 to 105, 115 to 135, 144 to 164, 194 to 214, and 217 to 237; these read SAYM…GMAG, FFPL…IGII, LIVT…YGLY, LFVP…IEVI, FVGM…LPLG, and VAVT…FTIL.

The protein belongs to the ATPase A chain family. As to quaternary structure, F-type ATPases have 2 components, CF(1) - the catalytic core - and CF(0) - the membrane proton channel. CF(1) has five subunits: alpha(3), beta(3), gamma(1), delta(1), epsilon(1). CF(0) has four main subunits: a, b, b' and c.

It is found in the cell inner membrane. Key component of the proton channel; it plays a direct role in the translocation of protons across the membrane. This Rhodopseudomonas palustris (strain BisB5) protein is ATP synthase subunit a.